The primary structure comprises 257 residues: Diphthine synthase (257 aa).

Residues L9, D83, M86, 111-112, and I163 contribute to the S-adenosyl-L-methionine site; that span reads SI.

Belongs to the diphthine synthase family. As to quaternary structure, homodimer.

The enzyme catalyses 2-[(3S)-amino-3-carboxypropyl]-L-histidyl-[translation elongation factor 2] + 3 S-adenosyl-L-methionine = diphthine-[translation elongation factor 2] + 3 S-adenosyl-L-homocysteine + 3 H(+). It participates in protein modification; peptidyl-diphthamide biosynthesis. In terms of biological role, S-adenosyl-L-methionine-dependent methyltransferase that catalyzes the trimethylation of the amino group of the modified target histidine residue in translation elongation factor 2 (EF-2), to form an intermediate called diphthine. The three successive methylation reactions represent the second step of diphthamide biosynthesis. This Thermoplasma acidophilum (strain ATCC 25905 / DSM 1728 / JCM 9062 / NBRC 15155 / AMRC-C165) protein is Diphthine synthase.